The sequence spans 86 residues: UPF0147 protein PYRAB16980 (86 aa).

The protein belongs to the UPF0147 family.

The protein is UPF0147 protein PYRAB16980 of Pyrococcus abyssi (strain GE5 / Orsay).